The following is a 525-amino-acid chain: Probable histidine ammonia-lyase (525 aa).

The 5-imidazolinone (Ala-Gly) cross-link spans 145 to 147; it reads ASG. At S146 the chain carries 2,3-didehydroalanine (Ser).

This sequence belongs to the PAL/histidase family. Contains an active site 4-methylidene-imidazol-5-one (MIO), which is formed autocatalytically by cyclization and dehydration of residues Ala-Ser-Gly.

The protein resides in the cytoplasm. It catalyses the reaction L-histidine = trans-urocanate + NH4(+). The protein operates within amino-acid degradation; L-histidine degradation into L-glutamate; N-formimidoyl-L-glutamate from L-histidine: step 1/3. The polypeptide is Probable histidine ammonia-lyase (Halobacterium salinarum (strain ATCC 29341 / DSM 671 / R1)).